Consider the following 310-residue polypeptide: Carbamate kinase 1 (310 aa).

This sequence belongs to the carbamate kinase family.

Its subcellular location is the cytoplasm. It carries out the reaction hydrogencarbonate + NH4(+) + ATP = carbamoyl phosphate + ADP + H2O + H(+). The protein operates within metabolic intermediate metabolism; carbamoyl phosphate degradation; CO(2) and NH(3) from carbamoyl phosphate: step 1/1. The sequence is that of Carbamate kinase 1 (arcC1) from Staphylococcus aureus (strain MRSA252).